The chain runs to 348 residues: Holliday junction branch migration complex subunit RuvB (348 aa).

Residues 4-186 are large ATPase domain (RuvB-L); that stretch reads TDRIISANTV…FGIIQRLEFY (183 aa). ATP-binding positions include Ile-25, Arg-26, Gly-67, Lys-70, Thr-71, Thr-72, 133-135, Arg-176, Tyr-186, and Arg-223; that span reads EDY. Thr-71 contacts Mg(2+). The segment at 187 to 257 is small ATPAse domain (RuvB-S); it reads SVDDLAKIVY…IADKALTMLK (71 aa). The segment at 260–348 is head domain (RuvB-H); that stretch reads PVGFDHMDHK…SSDQQQNLSL (89 aa). Positions 315 and 320 each coordinate DNA.

The protein belongs to the RuvB family. In terms of assembly, homohexamer. Forms an RuvA(8)-RuvB(12)-Holliday junction (HJ) complex. HJ DNA is sandwiched between 2 RuvA tetramers; dsDNA enters through RuvA and exits via RuvB. An RuvB hexamer assembles on each DNA strand where it exits the tetramer. Each RuvB hexamer is contacted by two RuvA subunits (via domain III) on 2 adjacent RuvB subunits; this complex drives branch migration. In the full resolvosome a probable DNA-RuvA(4)-RuvB(12)-RuvC(2) complex forms which resolves the HJ.

The protein localises to the cytoplasm. It carries out the reaction ATP + H2O = ADP + phosphate + H(+). Functionally, the RuvA-RuvB-RuvC complex processes Holliday junction (HJ) DNA during genetic recombination and DNA repair, while the RuvA-RuvB complex plays an important role in the rescue of blocked DNA replication forks via replication fork reversal (RFR). RuvA specifically binds to HJ cruciform DNA, conferring on it an open structure. The RuvB hexamer acts as an ATP-dependent pump, pulling dsDNA into and through the RuvAB complex. RuvB forms 2 homohexamers on either side of HJ DNA bound by 1 or 2 RuvA tetramers; 4 subunits per hexamer contact DNA at a time. Coordinated motions by a converter formed by DNA-disengaged RuvB subunits stimulates ATP hydrolysis and nucleotide exchange. Immobilization of the converter enables RuvB to convert the ATP-contained energy into a lever motion, pulling 2 nucleotides of DNA out of the RuvA tetramer per ATP hydrolyzed, thus driving DNA branch migration. The RuvB motors rotate together with the DNA substrate, which together with the progressing nucleotide cycle form the mechanistic basis for DNA recombination by continuous HJ branch migration. Branch migration allows RuvC to scan DNA until it finds its consensus sequence, where it cleaves and resolves cruciform DNA. This chain is Holliday junction branch migration complex subunit RuvB, found in Francisella philomiragia subsp. philomiragia (strain ATCC 25017 / CCUG 19701 / FSC 153 / O#319-036).